The chain runs to 268 residues: Tryptophan synthase alpha chain (268 aa).

Residues E49 and D60 each act as proton acceptor in the active site.

Belongs to the TrpA family. In terms of assembly, tetramer of two alpha and two beta chains.

It carries out the reaction (1S,2R)-1-C-(indol-3-yl)glycerol 3-phosphate + L-serine = D-glyceraldehyde 3-phosphate + L-tryptophan + H2O. The protein operates within amino-acid biosynthesis; L-tryptophan biosynthesis; L-tryptophan from chorismate: step 5/5. Its function is as follows. The alpha subunit is responsible for the aldol cleavage of indoleglycerol phosphate to indole and glyceraldehyde 3-phosphate. The sequence is that of Tryptophan synthase alpha chain from Escherichia coli (strain ATCC 8739 / DSM 1576 / NBRC 3972 / NCIMB 8545 / WDCM 00012 / Crooks).